The primary structure comprises 800 residues: Phenylalanine--tRNA ligase beta subunit (800 aa).

The region spanning 39–154 (TKDIKNLVVG…EAQVPGTDAL (116 aa)) is the tRNA-binding domain. The region spanning 408–483 (AFITPIDITA…RIYGYDDIPS (76 aa)) is the B5 domain. Mg(2+) is bound by residues D461, D467, E470, and E471. The FDX-ACB domain occupies 708-800 (PRFPGMSRDI…ALIEQGAVIR (93 aa)).

The protein belongs to the phenylalanyl-tRNA synthetase beta subunit family. Type 1 subfamily. In terms of assembly, tetramer of two alpha and two beta subunits. It depends on Mg(2+) as a cofactor.

The protein localises to the cytoplasm. It catalyses the reaction tRNA(Phe) + L-phenylalanine + ATP = L-phenylalanyl-tRNA(Phe) + AMP + diphosphate + H(+). The polypeptide is Phenylalanine--tRNA ligase beta subunit (Staphylococcus aureus (strain COL)).